The primary structure comprises 864 residues: Probable LRR receptor-like serine/threonine-protein kinase At1g07550 (864 aa).

The signal sequence occupies residues 1-23 (MDTCTRLLFAACATLSILHLVQS). Over 24-507 (QNQQGFISLD…SCGTRFPTAA (484 aa)) the chain is Extracellular. N-linked (GlcNAc...) asparagine glycosylation is found at N49, N229, N256, N289, N432, N445, and N464. LRR repeat units lie at residues 411-434 (RIVKLDLSSSGLNGVIPPSIQNLT), 435-457 (QLQELDLSQNNLTGKVPEFLAKM), and 459-480 (YLLVINLSGNKLSGLVPQALLD). The chain crosses the membrane as a helical span at residues 508–528 (VAASVSAVAIIILVLVLIFVL). Over 529–864 (RRRKPSAGKV…VDTEINPKAR (336 aa)) the chain is Cytoplasmic. The residue at position 551 (T551) is a Phosphothreonine. One can recognise a Protein kinase domain in the interval 560-831 (NNFQVVIGKG…QVVHVLNECL (272 aa)). ATP-binding positions include 566–574 (IGKGGFGVV) and K587. Y632 bears the Phosphotyrosine mark. The Proton acceptor role is filled by D684. Phosphothreonine is present on residues T718 and T723. A Phosphotyrosine modification is found at Y731.

The protein belongs to the protein kinase superfamily. Ser/Thr protein kinase family.

The protein localises to the membrane. It carries out the reaction L-seryl-[protein] + ATP = O-phospho-L-seryl-[protein] + ADP + H(+). The enzyme catalyses L-threonyl-[protein] + ATP = O-phospho-L-threonyl-[protein] + ADP + H(+). The chain is Probable LRR receptor-like serine/threonine-protein kinase At1g07550 from Arabidopsis thaliana (Mouse-ear cress).